We begin with the raw amino-acid sequence, 334 residues long: N-acetyl-gamma-glutamyl-phosphate reductase (334 aa).

The active site involves cysteine 154.

It belongs to the NAGSA dehydrogenase family. Type 1 subfamily.

It localises to the cytoplasm. It carries out the reaction N-acetyl-L-glutamate 5-semialdehyde + phosphate + NADP(+) = N-acetyl-L-glutamyl 5-phosphate + NADPH + H(+). Its pathway is amino-acid biosynthesis; L-arginine biosynthesis; N(2)-acetyl-L-ornithine from L-glutamate: step 3/4. Functionally, catalyzes the NADPH-dependent reduction of N-acetyl-5-glutamyl phosphate to yield N-acetyl-L-glutamate 5-semialdehyde. This chain is N-acetyl-gamma-glutamyl-phosphate reductase, found in Vibrio vulnificus (strain YJ016).